The primary structure comprises 159 residues: Eukaryotic translation initiation factor 5A (159 aa).

Over residues 1-12 (MSDEEHQFESKA) the composition is skewed to basic and acidic residues. Positions 1 to 23 (MSDEEHQFESKADAGASKTYPQQ) are disordered. K52 bears the Hypusine mark.

It belongs to the eIF-5A family. Post-translationally, lys-52 undergoes hypusination, a unique post-translational modification that consists in the addition of a butylamino group from spermidine to lysine side chain, leading to the formation of the unusual amino acid hypusine. eIF-5As are the only known proteins to undergo this modification, which is essential for their function.

Functionally, translation factor that promotes translation elongation and termination, particularly upon ribosome stalling at specific amino acid sequence contexts. Binds between the exit (E) and peptidyl (P) site of the ribosome and promotes rescue of stalled ribosome: specifically required for efficient translation of polyproline-containing peptides as well as other motifs that stall the ribosome. Acts as a ribosome quality control (RQC) cofactor by joining the RQC complex to facilitate peptidyl transfer during CAT tailing step. The chain is Eukaryotic translation initiation factor 5A (EIFSV1) from Senecio vernalis (Spring groundsel).